A 306-amino-acid polypeptide reads, in one-letter code: Protein FdhE homolog (306 aa).

The protein belongs to the FdhE family.

The protein resides in the cytoplasm. Necessary for formate dehydrogenase activity. This chain is Protein FdhE homolog, found in Proteus mirabilis (strain HI4320).